A 317-amino-acid polypeptide reads, in one-letter code: Ribosomal RNA small subunit methyltransferase H (317 aa).

S-adenosyl-L-methionine is bound by residues 30–32 (GGH), Asp50, Tyr74, Asp95, and Gln102.

The protein belongs to the methyltransferase superfamily. RsmH family.

It is found in the cytoplasm. It catalyses the reaction cytidine(1402) in 16S rRNA + S-adenosyl-L-methionine = N(4)-methylcytidine(1402) in 16S rRNA + S-adenosyl-L-homocysteine + H(+). Specifically methylates the N4 position of cytidine in position 1402 (C1402) of 16S rRNA. The polypeptide is Ribosomal RNA small subunit methyltransferase H (Nitrosomonas europaea (strain ATCC 19718 / CIP 103999 / KCTC 2705 / NBRC 14298)).